A 95-amino-acid chain; its full sequence is Small ribosomal subunit protein bS18 (95 aa).

Belongs to the bacterial ribosomal protein bS18 family. In terms of assembly, part of the 30S ribosomal subunit. Forms a tight heterodimer with protein bS6.

Binds as a heterodimer with protein bS6 to the central domain of the 16S rRNA, where it helps stabilize the platform of the 30S subunit. The chain is Small ribosomal subunit protein bS18 from Acidiphilium cryptum (strain JF-5).